The following is a 445-amino-acid chain: Tubulin beta-3 chain (445 aa).

8 residues coordinate GTP: Gln11, Glu69, Ser138, Gly142, Thr143, Gly144, Asn204, and Asn226. Residue Glu69 coordinates Mg(2+). The disordered stretch occupies residues 425–445 (YQDATAEEYDEEEQDGEEEHD). Positions 429–445 (TAEEYDEEEQDGEEEHD) are enriched in acidic residues.

It belongs to the tubulin family. As to quaternary structure, dimer of alpha and beta chains. A typical microtubule is a hollow water-filled tube with an outer diameter of 25 nm and an inner diameter of 15 nM. Alpha-beta heterodimers associate head-to-tail to form protofilaments running lengthwise along the microtubule wall with the beta-tubulin subunit facing the microtubule plus end conferring a structural polarity. Microtubules usually have 13 protofilaments but different protofilament numbers can be found in some organisms and specialized cells. The cofactor is Mg(2+).

It is found in the cytoplasm. The protein resides in the cytoskeleton. Its function is as follows. Tubulin is the major constituent of microtubules, a cylinder consisting of laterally associated linear protofilaments composed of alpha- and beta-tubulin heterodimers. Microtubules grow by the addition of GTP-tubulin dimers to the microtubule end, where a stabilizing cap forms. Below the cap, tubulin dimers are in GDP-bound state, owing to GTPase activity of alpha-tubulin. The sequence is that of Tubulin beta-3 chain (TUBB3) from Zea mays (Maize).